A 476-amino-acid chain; its full sequence is Eukaryotic translation initiation factor 3 subunit L (476 aa).

The PCI domain maps to 257 to 452; the sequence is DAIRMFSHIL…DLDYALENDL (196 aa).

Belongs to the eIF-3 subunit L family. In terms of assembly, component of the eukaryotic translation initiation factor 3 (eIF-3) complex.

Its subcellular location is the cytoplasm. In terms of biological role, component of the eukaryotic translation initiation factor 3 (eIF-3) complex, which is involved in protein synthesis of a specialized repertoire of mRNAs and, together with other initiation factors, stimulates binding of mRNA and methionyl-tRNAi to the 40S ribosome. The eIF-3 complex specifically targets and initiates translation of a subset of mRNAs involved in cell proliferation. The polypeptide is Eukaryotic translation initiation factor 3 subunit L (Neosartorya fischeri (strain ATCC 1020 / DSM 3700 / CBS 544.65 / FGSC A1164 / JCM 1740 / NRRL 181 / WB 181) (Aspergillus fischerianus)).